The following is a 463-amino-acid chain: uncharacterized protein (463 aa).

A TRAM domain is found at 12 to 70; it reads LWQQGSVVELTITGLNHQGEGIGRFNERVVFVPDTAPGDRLEVRLVKVKRNYALAQLLK. [4Fe-4S] cluster-binding residues include C83, C89, C92, and C171. S-adenosyl-L-methionine is bound by residues Q295, Y324, E345, and D390. C417 (nucleophile) is an active-site residue.

It belongs to the class I-like SAM-binding methyltransferase superfamily. RNA M5U methyltransferase family.

This is an uncharacterized protein from Synechocystis sp. (strain ATCC 27184 / PCC 6803 / Kazusa).